A 130-amino-acid chain; its full sequence is Ribosome-binding factor A (130 aa).

It belongs to the RbfA family. Monomer. Binds 30S ribosomal subunits, but not 50S ribosomal subunits or 70S ribosomes.

It localises to the cytoplasm. Its function is as follows. One of several proteins that assist in the late maturation steps of the functional core of the 30S ribosomal subunit. Associates with free 30S ribosomal subunits (but not with 30S subunits that are part of 70S ribosomes or polysomes). Required for efficient processing of 16S rRNA. May interact with the 5'-terminal helix region of 16S rRNA. This Pseudomonas aeruginosa (strain LESB58) protein is Ribosome-binding factor A.